The following is a 95-amino-acid chain: Aspartyl/glutamyl-tRNA(Asn/Gln) amidotransferase subunit C (95 aa).

The protein belongs to the GatC family. As to quaternary structure, heterotrimer of A, B and C subunits.

The catalysed reaction is L-glutamyl-tRNA(Gln) + L-glutamine + ATP + H2O = L-glutaminyl-tRNA(Gln) + L-glutamate + ADP + phosphate + H(+). The enzyme catalyses L-aspartyl-tRNA(Asn) + L-glutamine + ATP + H2O = L-asparaginyl-tRNA(Asn) + L-glutamate + ADP + phosphate + 2 H(+). Its function is as follows. Allows the formation of correctly charged Asn-tRNA(Asn) or Gln-tRNA(Gln) through the transamidation of misacylated Asp-tRNA(Asn) or Glu-tRNA(Gln) in organisms which lack either or both of asparaginyl-tRNA or glutaminyl-tRNA synthetases. The reaction takes place in the presence of glutamine and ATP through an activated phospho-Asp-tRNA(Asn) or phospho-Glu-tRNA(Gln). The protein is Aspartyl/glutamyl-tRNA(Asn/Gln) amidotransferase subunit C of Allorhizobium ampelinum (strain ATCC BAA-846 / DSM 112012 / S4) (Agrobacterium vitis (strain S4)).